We begin with the raw amino-acid sequence, 190 residues long: FUN14 domain-containing protein 2 (190 aa).

Residues 1–13 (METSTQRTGSHLA) show a composition bias toward polar residues. The interval 1–31 (METSTQRTGSHLAQTAAARHSASSRGEAARV) is disordered. At 1 to 81 (METSTQRTGS…GQESGPSAEK (81 aa)) the chain is on the cytoplasmic side. Ser-10 and Ser-54 each carry phosphoserine. The helical transmembrane segment at 82-102 (YSVATQLLIGGVTGWCTGFIF) threads the bilayer. The Mitochondrial intermembrane segment spans residues 103–108 (QKVGKL). A helical membrane pass occupies residues 109-129 (AATAVGGGFFLLQLANHTGYI). At 130-165 (KVDWQRVEKDMKKAKEQLKIRKSNQIPTEVKSKAEE) the chain is on the cytoplasmic side. Ser-152 is subject to Phosphoserine. Residues 166-186 (VVSFVKKNVLVTGGFFGGFLL) traverse the membrane as a helical segment. At 187–190 (GMAS) the chain is on the mitochondrial intermembrane side.

It belongs to the FUN14 family.

Its subcellular location is the mitochondrion outer membrane. It is found in the nucleus. Its function is as follows. Binds directly and specifically 1,2-Diacyl-sn-glycero-3-phospho-(1'-myo-inositol-3',4',5'-bisphosphate) (PIP3) leading to the recruitment of PIP3 to mitochondria and may play a role in the regulation of the platelet activation via AKT/GSK3B/cGMP signaling pathways. May act as transcription factor that regulates SREBP1 (isoform SREBP-1C) expression in order to modulate triglyceride (TG) homeostasis in hepatocytes. The polypeptide is FUN14 domain-containing protein 2 (Bos taurus (Bovine)).